Reading from the N-terminus, the 870-residue chain is Probable disease resistance protein At1g59620 (870 aa).

An NB-ARC domain is found at 123–432 (DKRNMRQTFS…AAEGMPRPRY (310 aa)). 167-174 (GMGGIGKT) serves as a coordination point for ATP. LRR repeat units lie at residues 543 to 567 (LQLM…IGLL), 568 to 590 (IHLR…MQNL), 703 to 726 (MSGI…IYMP), 735 to 758 (PWHL…ILEK), 759 to 786 (LLQL…GFPQ), and 808 to 833 (MPRL…KFIT).

Belongs to the disease resistance NB-LRR family.

In terms of biological role, probable disease resistance protein. This chain is Probable disease resistance protein At1g59620, found in Arabidopsis thaliana (Mouse-ear cress).